The chain runs to 256 residues: Type III pantothenate kinase (256 aa).

6-13 contributes to the ATP binding site; the sequence is DAGNSRIK. Substrate is bound by residues Y90 and 97–100; that span reads GSDR. D99 serves as the catalytic Proton acceptor. Residue T123 participates in ATP binding. T187 provides a ligand contact to substrate.

The protein belongs to the type III pantothenate kinase family. As to quaternary structure, homodimer. It depends on NH4(+) as a cofactor. K(+) serves as cofactor.

The protein resides in the cytoplasm. The enzyme catalyses (R)-pantothenate + ATP = (R)-4'-phosphopantothenate + ADP + H(+). It functions in the pathway cofactor biosynthesis; coenzyme A biosynthesis; CoA from (R)-pantothenate: step 1/5. Functionally, catalyzes the phosphorylation of pantothenate (Pan), the first step in CoA biosynthesis. The chain is Type III pantothenate kinase from Burkholderia mallei (strain NCTC 10247).